The sequence spans 408 residues: Aspartate aminotransferase, cytoplasmic (408 aa).

L-aspartate contacts are provided by Gly36, Trp133, and Asn187. Lys251 carries the post-translational modification N6-(pyridoxal phosphate)lysine. Arg379 is a binding site for L-aspartate.

Belongs to the class-I pyridoxal-phosphate-dependent aminotransferase family. In terms of assembly, homodimer. It depends on pyridoxal 5'-phosphate as a cofactor. As to expression, expressed in all somatic tissues including the nervous system.

It is found in the cytoplasm. It catalyses the reaction L-aspartate + 2-oxoglutarate = oxaloacetate + L-glutamate. Functionally, biosynthesis of L-glutamate from L-aspartate. Important regulator of levels of glutamate, the major excitatory neurotransmitter of the central nervous system. This is Aspartate aminotransferase, cytoplasmic from Caenorhabditis elegans.